Consider the following 224-residue polypeptide: Cytidylate kinase (224 aa).

14–22 (GPAGSGKST) contacts ATP.

The protein belongs to the cytidylate kinase family. Type 1 subfamily.

It localises to the cytoplasm. It carries out the reaction CMP + ATP = CDP + ADP. The enzyme catalyses dCMP + ATP = dCDP + ADP. The protein is Cytidylate kinase of Mycoplasmoides gallisepticum (strain R(low / passage 15 / clone 2)) (Mycoplasma gallisepticum).